The primary structure comprises 55 residues: Probable Rubredoxin-2 (55 aa).

Positions 4 to 54 (MARYQCMCGWVYDEDKGEPSQNIPPGTKFEDLPDTFRCPQCGLGKNAFRKI) constitute a Rubredoxin-like domain. Residues Cys-9, Cys-11, Cys-41, and Cys-44 each contribute to the Fe cation site.

Belongs to the rubredoxin family. The cofactor is Fe(3+).

Rubredoxin is a small nonheme, iron protein lacking acid-labile sulfide. Its single Fe, chelated to 4 Cys, functions as an electron acceptor and may also stabilize the conformation of the molecule. This chain is Probable Rubredoxin-2, found in Methanocaldococcus jannaschii (strain ATCC 43067 / DSM 2661 / JAL-1 / JCM 10045 / NBRC 100440) (Methanococcus jannaschii).